A 218-amino-acid polypeptide reads, in one-letter code: N-(5'-phosphoribosyl)anthranilate isomerase (218 aa).

This sequence belongs to the TrpF family.

It catalyses the reaction N-(5-phospho-beta-D-ribosyl)anthranilate = 1-(2-carboxyphenylamino)-1-deoxy-D-ribulose 5-phosphate. It functions in the pathway amino-acid biosynthesis; L-tryptophan biosynthesis; L-tryptophan from chorismate: step 3/5. This chain is N-(5'-phosphoribosyl)anthranilate isomerase, found in Desulfatibacillum aliphaticivorans.